We begin with the raw amino-acid sequence, 1231 residues long: Multifunctional 2-oxoglutarate metabolism enzyme (1231 aa).

The 2-oxoglutarate dehydrogenase E1, N-terminal part stretch occupies residues 1 to 41 (MANISSPFGQNEWLVEAMYRKFRDDPSSVDPSWHEFLVDYS). The segment covering 24–37 (DDPSSVDPSWHEFL) has biased composition (basic and acidic residues). Residues 24 to 56 (DDPSSVDPSWHEFLVDYSPEPTSQPAAEPTRVT) form a disordered region. The linker stretch occupies residues 42-88 (PEPTSQPAAEPTRVTSPLVAERAAAAAPQAPPKPADTAAAGNGVVAA). Residues 89-337 (LAAKTAVPPP…LRTIHELLLS (249 aa)) form a succinyltransferase E2 region. His-316 functions as the Proton acceptor; for succinyltransferase activity in the catalytic mechanism. A 2-oxoglutarate dehydrogenase E1, C-terminal part region spans residues 338–1231 (DGFWDEVFRE…QQEILDEAFG (894 aa)). Arg-542 lines the thiamine diphosphate pocket. 2-oxoglutarate is bound by residues His-581 and Ser-606. Residues Ser-606, Leu-608, Asp-649, Ala-650, Ala-651, and Asn-682 each contribute to the thiamine diphosphate site. Asp-649 is a binding site for Mg(2+). Residues Asn-682 and Ile-684 each coordinate Mg(2+). Positions 787 to 817 (DISMKEAEDALRDYQGQLERVFNEVRELEKH) form a coiled coil. His-1024 lines the 2-oxoglutarate pocket. Residues Thr-1042, Arg-1058, Lys-1093, Ser-1096, Gln-1146, Arg-1153, and Arg-1154 each contribute to the acetyl-CoA site.

The protein belongs to the 2-oxoacid dehydrogenase family. Kgd subfamily. As to quaternary structure, homodimer. The 2-oxoglutarate dehydrogenase (ODH) complex contains multiple copies of three enzymatic components: 2-oxoglutarate dehydrogenase (E1), dihydrolipoamide succinyltransferase (E2) and lipoamide dehydrogenase (E3). It depends on Mg(2+) as a cofactor. Requires thiamine diphosphate as cofactor.

The catalysed reaction is glyoxylate + 2-oxoglutarate + H(+) = 2-hydroxy-3-oxoadipate + CO2. It catalyses the reaction 2-oxoglutarate + H(+) = succinate semialdehyde + CO2. It carries out the reaction N(6)-[(R)-lipoyl]-L-lysyl-[protein] + 2-oxoglutarate + H(+) = N(6)-[(R)-S(8)-succinyldihydrolipoyl]-L-lysyl-[protein] + CO2. The enzyme catalyses N(6)-[(R)-dihydrolipoyl]-L-lysyl-[protein] + succinyl-CoA = N(6)-[(R)-S(8)-succinyldihydrolipoyl]-L-lysyl-[protein] + CoA. It participates in carbohydrate metabolism; tricarboxylic acid cycle; succinate from 2-oxoglutarate (transferase route): step 1/2. Its pathway is carbohydrate metabolism; tricarboxylic acid cycle; succinyl-CoA from 2-oxoglutarate (dehydrogenase route): step 1/1. Its activity is regulated as follows. Alpha-ketoglutarate dehydrogenase and decarboxylase activities are inhibited by unphosphorylated GarA, and allosterically activated by acetyl-CoA, the main substrate of the TCA cycle. Shows three enzymatic activities that share a first common step, the attack of thiamine-PP on 2-oxoglutarate (alpha-ketoglutarate, KG), leading to the formation of an enamine-thiamine-PP intermediate upon decarboxylation. Thus, displays KGD activity, catalyzing the decarboxylation from five-carbon 2-oxoglutarate to four-carbon succinate semialdehyde (SSA). Also catalyzes C-C bond formation between the activated aldehyde formed after decarboxylation of alpha-ketoglutarate and the carbonyl of glyoxylate (GLX), to yield 2-hydroxy-3-oxoadipate (HOA), which spontaneously decarboxylates to form 5-hydroxylevulinate (HLA). And is also a component of the 2-oxoglutarate dehydrogenase (ODH) complex, that catalyzes the overall conversion of 2-oxoglutarate to succinyl-CoA and CO(2). The KG decarboxylase and KG dehydrogenase reactions provide two alternative, tightly regulated, pathways connecting the oxidative and reductive branches of the TCA cycle. This is Multifunctional 2-oxoglutarate metabolism enzyme (kgd) from Mycobacterium bovis (strain ATCC BAA-935 / AF2122/97).